The primary structure comprises 147 residues: 3-dehydroquinate dehydratase (147 aa).

Tyr-23 acts as the Proton acceptor in catalysis. Substrate is bound by residues Asn-74, His-80, and Asp-87. Catalysis depends on His-100, which acts as the Proton donor. Residues 101–102 and Arg-111 each bind substrate; that span reads IS.

This sequence belongs to the type-II 3-dehydroquinase family. As to quaternary structure, homododecamer.

It carries out the reaction 3-dehydroquinate = 3-dehydroshikimate + H2O. Its pathway is metabolic intermediate biosynthesis; chorismate biosynthesis; chorismate from D-erythrose 4-phosphate and phosphoenolpyruvate: step 3/7. Functionally, catalyzes a trans-dehydration via an enolate intermediate. The sequence is that of 3-dehydroquinate dehydratase from Prochlorococcus marinus (strain MIT 9301).